We begin with the raw amino-acid sequence, 1400 residues long: ABC transporter G family member 30 (1400 aa).

N116 carries an N-linked (GlcNAc...) asparagine glycan. Residues L141–E414 form the ABC transporter 1 domain. Residue G174 to T181 coordinates ATP. Residue N472 is glycosylated (N-linked (GlcNAc...) asparagine). The region spanning E492–F704 is the ABC transmembrane type-2 1 domain. 7 helical membrane passes run F510 to F530, L553 to V573, F582 to L602, F628 to I648, I652 to F672, M679 to L699, and T738 to L758. The 246-residue stretch at V808–G1053 folds into the ABC transporter 2 domain. Residue G845–T852 coordinates ATP. N-linked (GlcNAc...) asparagine glycosylation is found at N899 and N1040. One can recognise an ABC transmembrane type-2 2 domain in the interval V1125–Y1339. 7 helical membrane-spanning segments follow: residues H1144 to W1164, I1179 to I1199, V1228 to P1248, L1263 to L1283, M1289 to I1309, W1317 to S1337, and V1372 to M1392.

Belongs to the ABC transporter superfamily. ABCG family. PDR (TC 3.A.1.205) subfamily. In terms of tissue distribution, confined to roots. In seeds, mainly expressed in the embryo and, to a lesser extent, in the endosperm.

The protein resides in the cell membrane. The catalysed reaction is abscisate(out) + ATP + H2O = abscisate(in) + ADP + phosphate + H(+). Functionally, together with ABCG40, import into the embryo the abscisic acid (ABA) delivered from the endosperm via ABCG25 and ABCG31-mediated export to suppress radicle extension and subsequent embryonic growth. Involved in root secretion of phytochemicals (phenolics and sugars) which regulate soil microbiota, influencing both fungal and bacterial communities. May be a general defense protein. The polypeptide is ABC transporter G family member 30 (Arabidopsis thaliana (Mouse-ear cress)).